The primary structure comprises 116 residues: Prefoldin subunit beta (116 aa).

The protein belongs to the prefoldin subunit beta family. As to quaternary structure, heterohexamer of two alpha and four beta subunits.

The protein localises to the cytoplasm. In terms of biological role, molecular chaperone capable of stabilizing a range of proteins. Seems to fulfill an ATP-independent, HSP70-like function in archaeal de novo protein folding. This is Prefoldin subunit beta from Methanobrevibacter smithii (strain ATCC 35061 / DSM 861 / OCM 144 / PS).